The sequence spans 434 residues: Putative polysaccharide biosynthesis protein with aminopeptidase-like domain (434 aa).

2 aminopeptidase-like regions span residues 1 to 55 (MEEI…IHEV) and 57 to 355 (SGTK…IENN). An insert region spans residues 56 to 164 (KSGTKVFDWT…VVIDSSLEDG (109 aa)). 3 residues coordinate Zn(2+): H189, D195, and H324. Residues 356–434 (RTYLNLNPKC…LYRVELLKLV (79 aa)) form a permutated winged helix-turn-helix region.

The protein belongs to the UPF0770 family. Homotrimer. The cofactor is Zn(2+).

Its function is as follows. The genomic context suggests a role in the biosynthesis of modified polysaccharides; this association with genes involved in carbohydrate metabolism is observed in several phylogenetically distinct taxa. Is not expected to have peptidase activity despite low similarity to aminopeptidases. In Clostridium acetobutylicum (strain ATCC 824 / DSM 792 / JCM 1419 / IAM 19013 / LMG 5710 / NBRC 13948 / NRRL B-527 / VKM B-1787 / 2291 / W), this protein is Putative polysaccharide biosynthesis protein with aminopeptidase-like domain.